A 929-amino-acid polypeptide reads, in one-letter code: Probable LRR receptor-like serine/threonine-protein kinase At1g67720 (929 aa).

The signal sequence occupies residues 1 to 21; it reads MGLCLAQLAVTCLFLVPFVLS. At 22–531 the chain is on the extracellular side; that stretch reads QVTEFVSIDC…NEAQRKHFWQ (510 aa). 7 N-linked (GlcNAc...) asparagine glycosylation sites follow: N36, N173, N236, N293, N320, N332, and N407. LRR repeat units follow at residues 413-437, 438-460, 461-484, and 485-508; these read PPRVTKIALSRKNLRGEIPPGINYM, EALTELWLDDNELTGTLPDMSKL, VNLKIMHLENNQLSGSLPPYLAHL, and PNLQELSIENNSFKGKIPSALLKG. A glycan (N-linked (GlcNAc...) asparagine) is linked at N494. The helical transmembrane segment at 532–552 threads the bilayer; it reads ILGISIAAVAILLLLVGGSLV. The Cytoplasmic segment spans residues 553 to 929; sequence LLCALRKTKR…SRNSLAPAAR (377 aa). A Protein kinase domain is found at 606–880; the sequence is DNFSKKVGRG…EVIVAIQDAI (275 aa). ATP contacts are provided by residues 612–620 and K634; that span reads VGRGSFGSV. Y679 carries the post-translational modification Phosphotyrosine. D731 serves as the catalytic Proton acceptor. A phosphoserine mark is found at S735 and S764. T770 is subject to Phosphothreonine. Y778 bears the Phosphotyrosine mark.

Belongs to the protein kinase superfamily. Ser/Thr protein kinase family.

It is found in the membrane. The catalysed reaction is L-seryl-[protein] + ATP = O-phospho-L-seryl-[protein] + ADP + H(+). It catalyses the reaction L-threonyl-[protein] + ATP = O-phospho-L-threonyl-[protein] + ADP + H(+). This is Probable LRR receptor-like serine/threonine-protein kinase At1g67720 from Arabidopsis thaliana (Mouse-ear cress).